Reading from the N-terminus, the 741-residue chain is Cellulose 1,4-beta-cellobiosidase (reducing end) CelS (741 aa).

The N-terminal stretch at 1–27 is a signal peptide; the sequence is MVKSRKISILLAVAMLVSIMIPTTAFA. Glu-76 is a substrate binding site. The Proton donor role is filled by Glu-87. Residues Thr-140, Asn-204, Asp-241, Gln-247, and 251 to 252 each bind substrate; that span reads TN. Catalysis depends on Asp-255, which acts as the Nucleophile. Substrate-binding positions include 301-302, 326-327, Tyr-421, Asp-520, and 645-646; these read KY, WY, and WH. The 67-residue stretch at 673-739 folds into the Dockerin domain; it reads STKLYGDVND…ILKEIDTLPY (67 aa). Positions 679, 681, 683, 684, 685, 690, 711, 712, 713, 715, 717, and 722 each coordinate Ca(2+).

It belongs to the glycosyl hydrolase 48 (cellulase L) family.

The protein resides in the secreted. It catalyses the reaction Hydrolysis of (1-&gt;4)-beta-D-glucosidic linkages in cellulose and similar substrates, releasing cellobiose from the reducing ends of the chains.. Its activity is regulated as follows. Inhibited by cellobiose and lactose, but not by glucose. In terms of biological role, this enzyme catalyzes the exohydrolysis of 1,4-beta-glucosidic linkages in cellulose with a preference for amorphous or crystalline cellulose over carboxymethyl cellulose. The protein is Cellulose 1,4-beta-cellobiosidase (reducing end) CelS (celS) of Acetivibrio thermocellus (strain ATCC 27405 / DSM 1237 / JCM 9322 / NBRC 103400 / NCIMB 10682 / NRRL B-4536 / VPI 7372) (Clostridium thermocellum).